The sequence spans 570 residues: Apyrase (570 aa).

A signal peptide spans Met1–Ala23. Residues Asp43, His45, and Asp94 each contribute to the a divalent metal cation site. A glycan (N-linked (GlcNAc...) asparagine) is linked at Asn108. Residues Asn126, His229, and His253 each contribute to the a divalent metal cation site. 2 N-linked (GlcNAc...) asparagine glycosylation sites follow: Asn287 and Asn326. Arg367 provides a ligand contact to AMP. An N-linked (GlcNAc...) asparagine glycan is attached at Asn387. AMP is bound by residues Arg402 and Asp507. N-linked (GlcNAc...) asparagine glycosylation is found at Asn552 and Asn555.

The protein belongs to the 5'-nucleotidase family. As to quaternary structure, interacts with human PLAT; the interaction results in PLAT activation probably via an allosteric activation mechanism. It depends on a divalent metal cation as a cofactor. In terms of tissue distribution, saliva (at protein level). Salivary gland (at protein level). Not detected in midgut.

The protein localises to the secreted. It carries out the reaction a ribonucleoside 5'-triphosphate + 2 H2O = a ribonucleoside 5'-phosphate + 2 phosphate + 2 H(+). Cleaves adenosine triphosphate (ATP) and adenosine diphosphate (ADP) to adenosine monophosphate (AMP) and inorganic phosphate. Enhances fibrin degradation in the midgut blood bolus. Activates human tissue plasminogen activator (PLAT), probably via an allosteric activation mechanism. Inhibits ADP-mediated host platelet aggregation in vitro and in mosquito midgut. Inhibits host neutrophil activation in the mosquito midgut: reduces neutrophil extracellular traps formation in the presence of platelets and the formation of total cell- and mitochondrial-derived reactive oxygen species. Its function is as follows. (Microbial infection) Promotes Plasmodium berghei parasite transmission from the mammalian host to the mosquito probably by reducing the blood bolus viscosity. Facilitates sporozoite transmission from the mosquito to the mammalian host during blood feeding. In Anopheles gambiae (African malaria mosquito), this protein is Apyrase.